The chain runs to 245 residues: Lytic switch protein BZLF1 (245 aa).

The segment at 1–167 is transactivation; that stretch reads MMDPNSTSED…RTRKPLQPES (167 aa). Phosphothreonine is present on residues Thr-14 and Thr-159. A disordered region spans residues 145–167; sequence GAPQPAPAAAPARRTRKPLQPES. The Bipartite nuclear localization signal signature appears at 157–194; the sequence is RRTRKPLQPESLEECDSELEIKRYKNRVASRKCRAKFK. Residues Ser-167, Ser-173, and Ser-186 each carry the phosphoserine modification. The basic motif stretch occupies residues 178–195; sequence KRYKNRVASRKCRAKFKH. Positions 178 to 228 constitute a bZIP domain; the sequence is KRYKNRVASRKCRAKFKHLLQHYREVASAKSSENDRLRLLLKQMCPSLDVD. Residues 196–228 form a leucine-zipper region; sequence LLQHYREVASAKSSENDRLRLLLKQMCPSLDVD. Positions 229–245 are accessory activation domain; it reads SIIPRTPDVLHEDLLNF.

It belongs to the bZIP family. As to quaternary structure, homodimer. Interacts (via b-ZIP domain) with the DNA polymerase processivity factor BMRF1 (via N-terminus); this interaction may inhibit BZLF1-induced transcription of the BMRF1 promoter. Interacts with human UBN1, CRTC2 and RACK1. Interacts (via N-terminus) with human PAX5 (via N-terminus); this interaction inhibits BZLF1-mediated lytic viral reactivation. Interacts (via leucine-zipper domain) with host CEBPA; this interaction induces G1 host cell cycle arrest. Interacts (via C-terminus) with host TP53BP1 (via C-terminus); this interaction is involved in the activation of the viral lytic cycle. Interacts with host chromatin-remodeling ATPase INO80; this interaction participates to the activation of early lytic viral genes by BZLF1. Interacts with host regulator of chromatin SMARCA5/hSNF2H; this interaction participates to the activation of early lytic viral genes by BZLF1. Interacts with host PLSCR1/Phospholipid scramblase 1; this interaction negatively regulates the transcriptional regulatory activity of BZLF1 by preventing the formation of the BZLF1-CBP complex.

It localises to the host nucleus. Transcription factor that acts as a molecular switch to induce the transition from the latent to the lytic or productive phase of the virus cycle. Mediates the switch from the latent to the lytic cycle of infection in cells containing a highly methylated viral genome. Probably binds to silenced chromatin and recruits host chromatin-remodeling enzymes. Regulates this switch by binding to 2 types of ZEBRA response elements (ZREs): the CpG-free AP-1 like elements (latency) and the methylated CpG-containing elements (lytic replication). Activates preferentially the methylated forms of the viral lytic R (BRLF1) and Na (BRRF1) gene promoters, the latters being the first genes activated during Z-mediated reactivation in latently infected cells. BZLF1 and BRLF1 act together to trigger lytic replication. Also binds the lytic origin of replication, oriLyt. Induces G1 cell cycle arrest by stabilizing the host CCAAT/enhancer binding protein CEBPA. This function is important because the lytic cycle preferentially takes place in host cells arrested in G1. The chain is Lytic switch protein BZLF1 from Homo sapiens (Human).